A 429-amino-acid chain; its full sequence is Nocturnin (429 aa).

Residues 1–73 (MYQSPRRLCS…SMGNGTSRLY (73 aa)) constitute a mitochondrion transit peptide. The disordered stretch occupies residues 21–68 (RRTLVPGPRRTLAPPVLGSRPKSPQLQAAAASGAARSRPRTVSSMGNG). Mg(2+) is bound at residue E193. Substrate-binding positions include E193, 217–219 (KPW), N261, 284–287 (HLKA), and 322–324 (DFN). The interaction with PPARG stretch occupies residues 341 to 351 (NLNSAYKLLSP). Residue H412 participates in substrate binding.

The protein belongs to the CCR4/nocturin family. In terms of assembly, interacts with PPARG. The cofactor is Mg(2+). In terms of tissue distribution, highly expressed in the differentiated adipocyte (at protein level). Ubiquitous.

The protein localises to the cytoplasm. It is found in the nucleus. The protein resides in the perinuclear region. It localises to the mitochondrion. The enzyme catalyses NADP(+) + H2O = phosphate + NAD(+). It carries out the reaction NADPH + H2O = phosphate + NADH. Its function is as follows. Phosphatase which catalyzes the conversion of NADP(+) to NAD(+) and of NADPH to NADH. Shows a small preference for NADPH over NADP(+). Represses translation and promotes degradation of target mRNA molecules. Plays an important role in post-transcriptional regulation of metabolic genes under circadian control. Exerts a rhythmic post-transcriptional control of genes necessary for metabolic functions including nutrient absorption, glucose/insulin sensitivity, lipid metabolism, adipogenesis, inflammation and osteogenesis. Plays an important role in favoring adipogenesis over osteoblastogenesis and acts as a key regulator of the adipogenesis/osteogenesis balance. Promotes adipogenesis by facilitating PPARG nuclear translocation which activates its transcriptional activity. Regulates circadian expression of NOS2 in the liver and negatively regulates the circadian expression of IGF1 in the bone. Critical for proper development of early embryos. The sequence is that of Nocturnin from Mus musculus (Mouse).